We begin with the raw amino-acid sequence, 390 residues long: Protein-glutamate methylesterase/protein-glutamine glutaminase 1 (390 aa).

The 118-residue stretch at 4 to 121 (KVLVVDDSGF…SRNPQKVKQL (118 aa)) folds into the Response regulatory domain. Asp55 is modified (4-aspartylphosphate). Positions 132–186 (SNRRSSGIGSASAASPAPAAPAPSTLSSRAPAPSAAAPARAVPSRTVAPAAAPAA) are enriched in low complexity. Residues 132 to 201 (SNRRSSGIGS…PAHPTTTGTA (70 aa)) form a disordered region. The region spanning 195-387 (PTTTGTAKRK…LDDIGRHLVE (193 aa)) is the CheB-type methylesterase domain. Residues Ser214, His241, and Asp334 contribute to the active site.

It belongs to the CheB family. Post-translationally, phosphorylated by CheA. Phosphorylation of the N-terminal regulatory domain activates the methylesterase activity.

It is found in the cytoplasm. It carries out the reaction [protein]-L-glutamate 5-O-methyl ester + H2O = L-glutamyl-[protein] + methanol + H(+). The enzyme catalyses L-glutaminyl-[protein] + H2O = L-glutamyl-[protein] + NH4(+). Its function is as follows. Involved in chemotaxis. Part of a chemotaxis signal transduction system that modulates chemotaxis in response to various stimuli. Catalyzes the demethylation of specific methylglutamate residues introduced into the chemoreceptors (methyl-accepting chemotaxis proteins or MCP) by CheR. Also mediates the irreversible deamidation of specific glutamine residues to glutamic acid. The sequence is that of Protein-glutamate methylesterase/protein-glutamine glutaminase 1 from Pseudomonas syringae pv. tomato (strain ATCC BAA-871 / DC3000).